A 46-amino-acid polypeptide reads, in one-letter code: GTP cyclohydrolase 1 (46 aa).

Zn(2+) is bound at residue cysteine 7.

Belongs to the GTP cyclohydrolase I family. In terms of assembly, homomer.

The enzyme catalyses GTP + H2O = 7,8-dihydroneopterin 3'-triphosphate + formate + H(+). Its pathway is cofactor biosynthesis; 7,8-dihydroneopterin triphosphate biosynthesis; 7,8-dihydroneopterin triphosphate from GTP: step 1/1. In Bacillus pumilus (Bacillus mesentericus), this protein is GTP cyclohydrolase 1 (folE).